The chain runs to 166 residues: Large ribosomal subunit protein bL9 (166 aa).

It belongs to the bacterial ribosomal protein bL9 family.

Functionally, binds to the 23S rRNA. The sequence is that of Large ribosomal subunit protein bL9 from Brachyspira hyodysenteriae (strain ATCC 49526 / WA1).